We begin with the raw amino-acid sequence, 179 residues long: Large ribosomal subunit protein uL5 (179 aa).

This sequence belongs to the universal ribosomal protein uL5 family. In terms of assembly, part of the 50S ribosomal subunit; part of the 5S rRNA/L5/L18/L25 subcomplex. Contacts the 5S rRNA and the P site tRNA. Forms a bridge to the 30S subunit in the 70S ribosome.

In terms of biological role, this is one of the proteins that bind and probably mediate the attachment of the 5S RNA into the large ribosomal subunit, where it forms part of the central protuberance. In the 70S ribosome it contacts protein S13 of the 30S subunit (bridge B1b), connecting the 2 subunits; this bridge is implicated in subunit movement. Contacts the P site tRNA; the 5S rRNA and some of its associated proteins might help stabilize positioning of ribosome-bound tRNAs. The sequence is that of Large ribosomal subunit protein uL5 from Stutzerimonas stutzeri (strain A1501) (Pseudomonas stutzeri).